The chain runs to 331 residues: 4-hydroxythreonine-4-phosphate dehydrogenase (331 aa).

His-137 and Thr-138 together coordinate substrate. A divalent metal cation is bound by residues His-167, His-212, and His-267. Residues Lys-275, Asn-284, and Arg-293 each contribute to the substrate site.

This sequence belongs to the PdxA family. Homodimer. The cofactor is Zn(2+). It depends on Mg(2+) as a cofactor. Co(2+) is required as a cofactor.

The protein localises to the cytoplasm. It catalyses the reaction 4-(phosphooxy)-L-threonine + NAD(+) = 3-amino-2-oxopropyl phosphate + CO2 + NADH. It functions in the pathway cofactor biosynthesis; pyridoxine 5'-phosphate biosynthesis; pyridoxine 5'-phosphate from D-erythrose 4-phosphate: step 4/5. Catalyzes the NAD(P)-dependent oxidation of 4-(phosphooxy)-L-threonine (HTP) into 2-amino-3-oxo-4-(phosphooxy)butyric acid which spontaneously decarboxylates to form 3-amino-2-oxopropyl phosphate (AHAP). This chain is 4-hydroxythreonine-4-phosphate dehydrogenase, found in Yersinia pestis bv. Antiqua (strain Angola).